Consider the following 94-residue polypeptide: Small ribosomal subunit protein uS19c (94 aa).

Belongs to the universal ribosomal protein uS19 family.

It localises to the plastid. The protein resides in the chloroplast. Functionally, protein S19 forms a complex with S13 that binds strongly to the 16S ribosomal RNA. The protein is Small ribosomal subunit protein uS19c (rps19) of Euglena gracilis.